A 308-amino-acid chain; its full sequence is SGSLLGMCLIVRIITGLFLAAHYTADTSLAFNSVAHTCRNVQFGWLIRNLHANGASLFFICIYLHIGRGLYYGSYLNKETWNIGVILLLALMATAFVGYVLPWGQMSFWGATVITNLFSAIPYIGQTLVEWAWGGFSVDNPTLTRFFALHFLLPFVIAGLTLVHLTFLHETGSNNPLGIPSDCDKIPFHPYYSTKDVLGFALLLTPLIALALFSPNLLGDPENFTPANPLATPPHIKPEWYFLFAYAILRSIPNKLGGVLALAASVLVLFLIPLLHNSKLRSMTFRPLSQILFWALVANLLVLTWVGS.

A run of 4 helical transmembrane segments spans residues serine 1–alanine 21, tryptophan 45–isoleucine 66, tryptophan 81–leucine 101, and phenylalanine 146–threonine 166. Heme b is bound by residues histidine 51 and histidine 65. Positions 150 and 164 each coordinate heme b. Histidine 169 contacts a ubiquinone. A run of 3 helical transmembrane segments spans residues threonine 194–serine 214, leucine 256–histidine 276, and leucine 288–serine 308.

Belongs to the cytochrome b family. The cytochrome bc1 complex contains 11 subunits: 3 respiratory subunits (MT-CYB, CYC1 and UQCRFS1), 2 core proteins (UQCRC1 and UQCRC2) and 6 low-molecular weight proteins (UQCRH/QCR6, UQCRB/QCR7, UQCRQ/QCR8, UQCR10/QCR9, UQCR11/QCR10 and a cleavage product of UQCRFS1). This cytochrome bc1 complex then forms a dimer. The cofactor is heme b.

The protein resides in the mitochondrion inner membrane. In terms of biological role, component of the ubiquinol-cytochrome c reductase complex (complex III or cytochrome b-c1 complex) that is part of the mitochondrial respiratory chain. The b-c1 complex mediates electron transfer from ubiquinol to cytochrome c. Contributes to the generation of a proton gradient across the mitochondrial membrane that is then used for ATP synthesis. This is Cytochrome b (MT-CYB) from Garritornis isidorei (Papuan babbler).